The chain runs to 324 residues: uncharacterized protein (324 aa).

This sequence to the C-terminal of para-aminobenzoate synthase component I.

This is an uncharacterized protein from Pasteurella multocida (strain Pm70).